Reading from the N-terminus, the 448-residue chain is Putative vacuolar cation/proton exchanger 6 (448 aa).

At 31–81 (MGLVNEVELKSLLEQETDSPQTNAASLMEQGSLRERRAKAPRNSVVQSFKI) the chain is on the cytoplasmic side. A helical transmembrane segment spans residues 82 to 102 (VILSNKLNLLLPFGPLAILVH). Topologically, residues 103–109 (YLTDNKG) are extracellular. Residues 110-130 (WFFLLSLVGITPLAERLGYAT) form a helical membrane-spanning segment. The Cytoplasmic segment spans residues 131–141 (EQLSCYTGATV). The helical transmembrane segment at 142 to 162 (GGLLNATFGNVIELIISIIAL) threads the bilayer. The cation selection stretch occupies residues 150 to 185 (GNVIELIISIIALKNGMIRVVQLTLLGSILSNILLV). The Extracellular portion of the chain corresponds to 163-178 (KNGMIRVVQLTLLGSI). A helical transmembrane segment spans residues 179–199 (LSNILLVLGCAFFCGGLVFPG). Residues 200–209 (KDQVFDKRNA) lie on the Cytoplasmic side of the membrane. Residues 210-230 (VVSSGMLLMAVMGLLFPTFLH) form a helical membrane-spanning segment. The Extracellular portion of the chain corresponds to 231–243 (YTHSEVHAGSSEL). The helical transmembrane segment at 244–264 (ALSRFISCIMLVAYAAYLFFQ) threads the bilayer. Residues 265–295 (LKSQPSFYTEKTNQNEETSNDDEDPEISKWE) are Cytoplasmic-facing. The helical transmembrane segment at 296–316 (AIIWLSIFTAWVSLLSGYLVD) threads the bilayer. At 317-334 (AIEGTSVSWKIPISFISV) the chain is on the extracellular side. Residues 335 to 355 (ILLPIVGNAAEHAGAIMFAMK) traverse the membrane as a helical segment. A cation selection region spans residues 341-376 (GNAAEHAGAIMFAMKDKLDLSLGVAIGSSIQISMFA). Topologically, residues 356-363 (DKLDLSLG) are cytoplasmic. A helical transmembrane segment spans residues 364 to 384 (VAIGSSIQISMFAVPFCVVIG). Residues 385-393 (WMMGAQMDL) lie on the Extracellular side of the membrane. A helical membrane pass occupies residues 394 to 414 (NLQLFETATLLITVIVVAFFL). The Cytoplasmic segment spans residues 415–425 (QLEGTSNYFKR). The helical transmembrane segment at 426 to 446 (LMLILCYLIVAASFFVHEDPH) threads the bilayer. Over 447–448 (QG) the chain is Extracellular.

The protein belongs to the Ca(2+):cation antiporter (CaCA) (TC 2.A.19) family. Cation/proton exchanger (CAX) subfamily.

It is found in the vacuole membrane. Vacuolar cation/proton exchanger (CAX). Translocates Ca(2+) and other metal ions into vacuoles using the proton gradient formed by H(+)-ATPase and H(+)-pyrophosphatase. This chain is Putative vacuolar cation/proton exchanger 6 (CAX6), found in Arabidopsis thaliana (Mouse-ear cress).